The following is a 675-amino-acid chain: Polyphosphate kinase (675 aa).

Position 42 (N42) interacts with ATP. The Mg(2+) site is built by R372 and R401. H431 (phosphohistidine intermediate) is an active-site residue. Positions 464, 558, and 586 each coordinate ATP.

Belongs to the polyphosphate kinase 1 (PPK1) family. It depends on Mg(2+) as a cofactor. An intermediate of this reaction is the autophosphorylated ppk in which a phosphate is covalently linked to a histidine residue through a N-P bond.

It carries out the reaction [phosphate](n) + ATP = [phosphate](n+1) + ADP. Catalyzes the reversible transfer of the terminal phosphate of ATP to form a long-chain polyphosphate (polyP). This is Polyphosphate kinase from Helicobacter pylori (strain ATCC 700392 / 26695) (Campylobacter pylori).